A 151-amino-acid polypeptide reads, in one-letter code: Aspartate carbamoyltransferase regulatory chain (151 aa).

Zn(2+) contacts are provided by C107, C112, C135, and C138.

The protein belongs to the PyrI family. Contains catalytic and regulatory chains. Zn(2+) serves as cofactor.

Involved in allosteric regulation of aspartate carbamoyltransferase. This chain is Aspartate carbamoyltransferase regulatory chain, found in Thermococcus onnurineus (strain NA1).